The chain runs to 478 residues: Trigger factor (478 aa).

Residues 162-243 (GDFVSIDLSA…VKSIKERELP (82 aa)) form the PPIase FKBP-type domain. Positions 424-478 (KDTDGNDIDTTEFFGPSGGAQAEAEGADEADADSDADSDTEADSDTEADEADEAK) are disordered. Positions 448–478 (EGADEADADSDADSDTEADSDTEADEADEAK) are enriched in acidic residues.

It belongs to the FKBP-type PPIase family. Tig subfamily.

Its subcellular location is the cytoplasm. The catalysed reaction is [protein]-peptidylproline (omega=180) = [protein]-peptidylproline (omega=0). Its function is as follows. Involved in protein export. Acts as a chaperone by maintaining the newly synthesized protein in an open conformation. Functions as a peptidyl-prolyl cis-trans isomerase. In Mycobacterium sp. (strain KMS), this protein is Trigger factor.